A 206-amino-acid polypeptide reads, in one-letter code: Small ribosomal subunit protein uS4 (206 aa).

One can recognise an S4 RNA-binding domain in the interval 93–156; the sequence is CRLDNLVYRL…RKIKIIAEAL (64 aa).

It belongs to the universal ribosomal protein uS4 family. In terms of assembly, part of the 30S ribosomal subunit. Contacts protein S5. The interaction surface between S4 and S5 is involved in control of translational fidelity.

Functionally, one of the primary rRNA binding proteins, it binds directly to 16S rRNA where it nucleates assembly of the body of the 30S subunit. In terms of biological role, with S5 and S12 plays an important role in translational accuracy. The polypeptide is Small ribosomal subunit protein uS4 (Protochlamydia amoebophila (strain UWE25)).